Consider the following 333-residue polypeptide: Quinolinate synthase (333 aa).

Iminosuccinate is bound by residues histidine 41 and serine 58. Cysteine 103 is a [4Fe-4S] cluster binding site. Iminosuccinate is bound by residues 129-131 and serine 146; that span reads YIN. Position 189 (cysteine 189) interacts with [4Fe-4S] cluster. Residues 215 to 217 and threonine 232 each bind iminosuccinate; that span reads HPE. Residue cysteine 282 coordinates [4Fe-4S] cluster.

This sequence belongs to the quinolinate synthase family. Type 2 subfamily. The cofactor is [4Fe-4S] cluster.

It localises to the cytoplasm. It catalyses the reaction iminosuccinate + dihydroxyacetone phosphate = quinolinate + phosphate + 2 H2O + H(+). It functions in the pathway cofactor biosynthesis; NAD(+) biosynthesis; quinolinate from iminoaspartate: step 1/1. Catalyzes the condensation of iminoaspartate with dihydroxyacetone phosphate to form quinolinate. This chain is Quinolinate synthase, found in Prochlorococcus marinus (strain MIT 9313).